A 332-amino-acid chain; its full sequence is Biotin synthase (332 aa).

The Radical SAM core domain occupies 53 to 282; the sequence is YFGKKVKLNM…SKEIRISGGR (230 aa). [4Fe-4S] cluster is bound by residues Cys71, Cys75, and Cys78. Cys115, Cys147, Cys207, and Arg277 together coordinate [2Fe-2S] cluster.

This sequence belongs to the radical SAM superfamily. Biotin synthase family. In terms of assembly, homodimer. It depends on [4Fe-4S] cluster as a cofactor. [2Fe-2S] cluster serves as cofactor.

It carries out the reaction (4R,5S)-dethiobiotin + (sulfur carrier)-SH + 2 reduced [2Fe-2S]-[ferredoxin] + 2 S-adenosyl-L-methionine = (sulfur carrier)-H + biotin + 2 5'-deoxyadenosine + 2 L-methionine + 2 oxidized [2Fe-2S]-[ferredoxin]. It functions in the pathway cofactor biosynthesis; biotin biosynthesis; biotin from 7,8-diaminononanoate: step 2/2. Catalyzes the conversion of dethiobiotin (DTB) to biotin by the insertion of a sulfur atom into dethiobiotin via a radical-based mechanism. This is Biotin synthase from Bacillus cytotoxicus (strain DSM 22905 / CIP 110041 / 391-98 / NVH 391-98).